The sequence spans 506 residues: Ribose import ATP-binding protein RbsA (506 aa).

2 consecutive ABC transporter domains span residues 5–237 (VQLI…VGRP) and 249–492 (PFGA…LAIE). 37–44 (GENGAGKS) is an ATP binding site.

This sequence belongs to the ABC transporter superfamily. Ribose importer (TC 3.A.1.2.1) family. The complex is composed of an ATP-binding protein (RbsA), two transmembrane proteins (RbsC) and a solute-binding protein (RbsB).

The protein localises to the cell inner membrane. It carries out the reaction D-ribose(out) + ATP + H2O = D-ribose(in) + ADP + phosphate + H(+). Part of the ABC transporter complex RbsABC involved in ribose import. Responsible for energy coupling to the transport system. The polypeptide is Ribose import ATP-binding protein RbsA (Chelativorans sp. (strain BNC1)).